Reading from the N-terminus, the 342-residue chain is tRNA dimethylallyltransferase (342 aa).

39-46 (GPTGSGKT) serves as a coordination point for ATP. 41–46 (TGSGKT) contributes to the substrate binding site. The interval 64–67 (DSMQ) is interaction with substrate tRNA.

It belongs to the IPP transferase family. As to quaternary structure, monomer. It depends on Mg(2+) as a cofactor.

The catalysed reaction is adenosine(37) in tRNA + dimethylallyl diphosphate = N(6)-dimethylallyladenosine(37) in tRNA + diphosphate. Catalyzes the transfer of a dimethylallyl group onto the adenine at position 37 in tRNAs that read codons beginning with uridine, leading to the formation of N6-(dimethylallyl)adenosine (i(6)A). The sequence is that of tRNA dimethylallyltransferase from Chlamydia caviae (strain ATCC VR-813 / DSM 19441 / 03DC25 / GPIC) (Chlamydophila caviae).